The following is a 638-amino-acid chain: Meiosis initiator protein (638 aa).

5 disordered regions span residues 1-21, 60-79, 138-249, 404-433, and 447-537; these read MFGS…SLGP, NQRN…KNHT, LAGL…KGGQ, PSAY…SLHR, and GNSK…PCPP. A compositionally biased stretch (polar residues) spans 7-20; sequence YLGSSEQPRANSLG. A basic motif; degenerate region spans residues 62–75; it reads RNQNKLLSPNKKQR. Residues 62-116 form the bHLH domain; sequence RNQNKLLSPNKKQRKNHTSKLQELALLLPIALKTGTKKLTKKEILVHVLQYIQYL. The segment at 76-116 is helix-loop-helix motif; that stretch reads KNHTSKLQELALLLPIALKTGTKKLTKKEILVHVLQYIQYL. Low complexity predominate over residues 157-167; sequence TPSSSPSSQKS. A compositionally biased stretch (polar residues) spans 182–191; it reads TQASESQTRT. The span at 412–430 shows a compositional bias: basic and acidic residues; that stretch reads PQEKDTASKAPKDPPESHS. Over residues 453–465 the composition is skewed to low complexity; sequence SSSSSSSSSSSSS. Positions 528-537 are enriched in basic residues; sequence KEKKKGPCPP. The HMG box DNA-binding region spans 540 to 608; it reads KKKCVNGFIM…QHNRIVKQDG (69 aa).

Interacts with STRA8.

The protein localises to the nucleus. Its function is as follows. Gatekeeper of meiotic initiation in both male and female germ cells. In complex with STRA8, directly activates the transcription of a subset of critical meiotic genes playing a central role in cell-cycle switching from mitosis to meiosis. Temporal expression of MEIOSIN is required for meiotic entry decision. The chain is Meiosis initiator protein from Homo sapiens (Human).